A 187-amino-acid chain; its full sequence is Elongation factor P (187 aa).

The protein belongs to the elongation factor P family.

Its subcellular location is the cytoplasm. The protein operates within protein biosynthesis; polypeptide chain elongation. Its function is as follows. Involved in peptide bond synthesis. Stimulates efficient translation and peptide-bond synthesis on native or reconstituted 70S ribosomes in vitro. Probably functions indirectly by altering the affinity of the ribosome for aminoacyl-tRNA, thus increasing their reactivity as acceptors for peptidyl transferase. This chain is Elongation factor P, found in Thermodesulfovibrio yellowstonii (strain ATCC 51303 / DSM 11347 / YP87).